Reading from the N-terminus, the 262-residue chain is Nurim (262 aa).

Residues Met-1–Ala-4 are Nuclear-facing. Residues Leu-5–Phe-28 form a helical membrane-spanning segment. Residues Thr-29–Ser-58 are Perinuclear space-facing. Residues Ile-59–Met-80 traverse the membrane as a helical segment. Over Ala-81–Gln-97 the chain is Nuclear. A helical transmembrane segment spans residues Arg-98 to Arg-114. The Perinuclear space segment spans residues Tyr-115–Trp-133. Residues Ala-134–Leu-164 form a helical membrane-spanning segment. The Nuclear segment spans residues Met-165–Leu-191. The helical transmembrane segment at Phe-192–Val-210 threads the bilayer. The Perinuclear space portion of the chain corresponds to Pro-211–Asp-216. A helical transmembrane segment spans residues Arg-217–Leu-234. Topologically, residues Asp-235–Glu-262 are nuclear.

It belongs to the nurim family.

The protein resides in the nucleus inner membrane. This Rattus norvegicus (Rat) protein is Nurim (Nrm).